The following is a 323-amino-acid chain: o-succinylbenzoate synthase (323 aa).

The active-site Proton donor is Lys134. Mg(2+)-binding residues include Asp162, Glu191, and Asp214. The active-site Proton acceptor is Lys236.

It belongs to the mandelate racemase/muconate lactonizing enzyme family. MenC type 1 subfamily. A divalent metal cation is required as a cofactor.

The catalysed reaction is (1R,6R)-6-hydroxy-2-succinyl-cyclohexa-2,4-diene-1-carboxylate = 2-succinylbenzoate + H2O. The protein operates within quinol/quinone metabolism; 1,4-dihydroxy-2-naphthoate biosynthesis; 1,4-dihydroxy-2-naphthoate from chorismate: step 4/7. Its pathway is quinol/quinone metabolism; menaquinone biosynthesis. In terms of biological role, converts 2-succinyl-6-hydroxy-2,4-cyclohexadiene-1-carboxylate (SHCHC) to 2-succinylbenzoate (OSB). In Pectobacterium atrosepticum (strain SCRI 1043 / ATCC BAA-672) (Erwinia carotovora subsp. atroseptica), this protein is o-succinylbenzoate synthase.